The sequence spans 564 residues: Probable diguanylate cyclase DgcQ (564 aa).

2 helical membrane-spanning segments follow: residues Leu-20–Leu-40 and Ile-360–Ile-380. Positions His-428–Asn-563 constitute a GGDEF domain. Asp-436 is a Mg(2+) binding site. The substrate site is built by Asn-444, His-449, and Asp-453. Glu-479 serves as a coordination point for Mg(2+). Glu-479 (proton acceptor) is an active-site residue.

Homodimer. Requires Mg(2+) as cofactor.

Its subcellular location is the cell inner membrane. It catalyses the reaction 2 GTP = 3',3'-c-di-GMP + 2 diphosphate. It participates in glycan metabolism; bacterial cellulose biosynthesis. Its pathway is purine metabolism; 3',5'-cyclic di-GMP biosynthesis. In terms of biological role, catalyzes the synthesis of cyclic-di-GMP (c-di-GMP) via the condensation of 2 GTP molecules. Cyclic-di-GMP is a second messenger which controls cell surface-associated traits in bacteria. Involved in the regulation of cellulose production. This chain is Probable diguanylate cyclase DgcQ, found in Escherichia coli O157:H7.